The chain runs to 360 residues: 3-isopropylmalate dehydrogenase (360 aa).

Position 76–89 (Gly-76–Glu-89) interacts with NAD(+). Substrate is bound by residues Arg-96, Arg-106, Arg-134, and Asp-224. Positions 224, 248, and 252 each coordinate Mg(2+). Residue Gly-282–Asn-294 coordinates NAD(+).

It belongs to the isocitrate and isopropylmalate dehydrogenases family. LeuB type 1 subfamily. As to quaternary structure, homodimer. The cofactor is Mg(2+). Requires Mn(2+) as cofactor.

Its subcellular location is the cytoplasm. The enzyme catalyses (2R,3S)-3-isopropylmalate + NAD(+) = 4-methyl-2-oxopentanoate + CO2 + NADH. It participates in amino-acid biosynthesis; L-leucine biosynthesis; L-leucine from 3-methyl-2-oxobutanoate: step 3/4. Its function is as follows. Catalyzes the oxidation of 3-carboxy-2-hydroxy-4-methylpentanoate (3-isopropylmalate) to 3-carboxy-4-methyl-2-oxopentanoate. The product decarboxylates to 4-methyl-2 oxopentanoate. The protein is 3-isopropylmalate dehydrogenase of Pseudomonas syringae pv. tomato (strain ATCC BAA-871 / DC3000).